A 231-amino-acid chain; its full sequence is Large ribosomal subunit protein uL1 (231 aa).

Belongs to the universal ribosomal protein uL1 family. In terms of assembly, part of the 50S ribosomal subunit.

Its function is as follows. Binds directly to 23S rRNA. The L1 stalk is quite mobile in the ribosome, and is involved in E site tRNA release. In terms of biological role, protein L1 is also a translational repressor protein, it controls the translation of the L11 operon by binding to its mRNA. The chain is Large ribosomal subunit protein uL1 from Buchnera aphidicola subsp. Acyrthosiphon pisum (strain APS) (Acyrthosiphon pisum symbiotic bacterium).